The chain runs to 2009 residues: Protein Daple (2009 aa).

Positions 11–131 (LFLQSPLVTW…KVLLLVLGCA (121 aa)) constitute a Calponin-homology (CH) domain. Residues 221–251 (QTQQPPSPGKFSSPDSTPSPTSSLSSEDKQH) form a disordered region. Phosphoserine is present on residues Ser-227 and Ser-239. The segment covering 232–245 (SSPDSTPSPTSSLS) has biased composition (low complexity). Coiled-coil stretches lie at residues 247 to 425 (EDKQ…QKQS) and 456 to 1008 (ELNE…TQEG). Ser-486 is modified (phosphoserine). A disordered region spans residues 1002–1036 (LRQTQEGGDKAQNALKRPPGKVTSHQEKEAWEPSH). The span at 1025–1036 (SHQEKEAWEPSH) shows a compositional bias: basic and acidic residues. Residues 1190–1384 (HRNLELEHKE…LEEKIMDQYK (195 aa)) adopt a coiled-coil conformation. The span at 1410–1419 (KEGSRERLKS) shows a compositional bias: basic and acidic residues. Disordered regions lie at residues 1410 to 1716 (KEGS…GAKM) and 1757 to 1787 (GMPS…HMPV). Residues 1430-1439 (PSDPASPSPS) show a composition bias toward low complexity. Phosphoserine is present on Ser-1435. The span at 1440-1449 (QALRSQTENP) shows a compositional bias: polar residues. Low complexity-rich tracts occupy residues 1510-1524 (TFST…SSST) and 1562-1581 (NSLE…SLKG). Ser-1592 is modified (phosphoserine). The GBA motif lies at 1652-1683 (HSASPSSEMVTLEEFLEESNRGGSPTHDTPSC). Residues 1681-1697 (PSCRDDLLSDYFRKAHD) show a composition bias toward basic and acidic residues. Residues 1761–1783 (RQVQPPQSLSLGRPRQTTMTQNC) show a composition bias toward polar residues. Ser-1798 is modified (phosphoserine). A disordered region spans residues 1808 to 2009 (SGPEACRPES…QTVWYEYGCV (202 aa)). The span at 1866-1883 (RPLDTRRFSLAPPKEERL) shows a compositional bias: basic and acidic residues. Residues 1898–1911 (GCSSGSNPQIQHFS) are compositionally biased toward polar residues. Gly residues predominate over residues 1943–1954 (TSEGDGGPGHGY). Residues 1981–1991 (SQGSSSKSTPA) are compositionally biased toward polar residues. Positions 2006 to 2009 (YGCV) match the PDZ-binding motif. Positions 2007-2009 (GCV) are DVL1-binding.

The protein belongs to the CCDC88 family. As to quaternary structure, homooligomer. Interacts with DVL1 (via PDZ domain); dissociates following initiation of non-canonical Wnt signaling. Interacts (via C-terminus) with ligand-activated Wnt receptor FZD7; competes with DVL1 for binding to FZD7 and displaces DVL1 from ligand-activated FZD7. Interacts (via GBA motif) with guanine nucleotide-binding protein G(i) alpha subunits GNAI1, GNAI2 and GNAI3 (inactive GDP-bound form); interacts with higher affinity with GNAI1 and GNAI3 than with GNAI2 and interaction leads to G(i) alpha subunit activation. Does not interact with GNAO1.

Its subcellular location is the cytoplasm. The protein resides in the cell junction. Required for activation of guanine nucleotide-binding proteins (G-proteins) during non-canonical Wnt signaling. Binds to ligand-activated Wnt receptor FZD7, displacing DVL1 from the FZD7 receptor and leading to inhibition of canonical Wnt signaling. Acts as a non-receptor guanine nucleotide exchange factor by also binding to guanine nucleotide-binding protein G(i) alpha (Gi-alpha) subunits, leading to their activation. Binding to Gi-alpha subunits displaces the beta and gamma subunits from the heterotrimeric G-protein complex, triggering non-canonical Wnt responses such as activation of RAC1 and PI3K-AKT signaling. Promotes apical constriction of cells via ARHGEF18. The sequence is that of Protein Daple (Ccdc88c) from Mus musculus (Mouse).